The primary structure comprises 176 residues: MIDDDGYRPNVGIVICNRQGQVMWARRFGQHSWQFPQGGINPGESAEQAMYRELFEEVGLSRKDVRILASTRNWLRYKLPKRLVRWDTKPVCIGQKQKWFLLQLMSADAEINMQTSSTPEFDGWRWVSYWYPVRQVVSFKRDVYRRVMKEFASVVMALQDNPPKLQSAPAYRRKRG.

The region spanning 6–149 (GYRPNVGIVI…KRDVYRRVMK (144 aa)) is the Nudix hydrolase domain. Residues 38–59 (GGINPGESAEQAMYRELFEEVG) carry the Nudix box motif.

This sequence belongs to the Nudix hydrolase family. RppH subfamily. Requires a divalent metal cation as cofactor.

Functionally, accelerates the degradation of transcripts by removing pyrophosphate from the 5'-end of triphosphorylated RNA, leading to a more labile monophosphorylated state that can stimulate subsequent ribonuclease cleavage. The polypeptide is RNA pyrophosphohydrolase (Salmonella paratyphi C (strain RKS4594)).